Here is a 755-residue protein sequence, read N- to C-terminus: Kelch-like protein 5 (755 aa).

Residues 152–184 form a disordered region; sequence LDRPEVDDGTSEEENESDSSSCRTSNSSQTLSS. The segment covering 158 to 168 has biased composition (acidic residues); it reads DDGTSEEENES. Over residues 169–184 the composition is skewed to low complexity; that stretch reads DSSSCRTSNSSQTLSS. A BTB domain is found at 220–287; the sequence is CDVILVAGDR…AYTGRLELKE (68 aa). Kelch repeat units lie at residues 468–514, 515–561, 563–608, 609–655, 657–708, and 709–754; these read TLFA…VLDD, KLYV…VLEG, MYAV…VLSG, KLYA…TWNG, LYAI…LLGD, and KLYA…VTVK.

In terms of tissue distribution, expressed in adrenal gland, ovary and thyroid gland and less abundantly in lymph node, prostate, spinal cord, testis and trachea.

It localises to the cytoplasm. Its subcellular location is the cytoskeleton. The chain is Kelch-like protein 5 (KLHL5) from Homo sapiens (Human).